The primary structure comprises 234 residues: ATP-dependent dethiobiotin synthetase BioD (234 aa).

12–17 serves as a coordination point for ATP; sequence GAGKTI. T16 lines the Mg(2+) pocket. The active site involves K39. T43 serves as a coordination point for substrate. Residues D47, 108-111, 168-169, and 200-202 contribute to the ATP site; these read EGLG, SC, and PYL. Residues D47 and E108 each coordinate Mg(2+).

Belongs to the dethiobiotin synthetase family. As to quaternary structure, homodimer. It depends on Mg(2+) as a cofactor.

Its subcellular location is the cytoplasm. It catalyses the reaction (7R,8S)-7,8-diammoniononanoate + CO2 + ATP = (4R,5S)-dethiobiotin + ADP + phosphate + 3 H(+). The catalysed reaction is (7R,8S)-8-amino-7-(carboxyamino)nonanoate + ATP = (4R,5S)-dethiobiotin + ADP + phosphate + H(+). The protein operates within cofactor biosynthesis; biotin biosynthesis; biotin from 7,8-diaminononanoate: step 1/2. In terms of biological role, catalyzes a mechanistically unusual reaction, the ATP-dependent insertion of CO2 between the N7 and N8 nitrogen atoms of 7,8-diaminopelargonic acid (DAPA, also called 7,8-diammoniononanoate) to form a ureido ring. This cyanobacterium does not encode bioA (which catalyzes the formation of the precursor for this reaction in the cannonical pathway), instead it encodes bioU, which replaces bioA and also performs the first half of the cannonical BioD reaction. Thus in this organism BioD has a different substrate. This Rippkaea orientalis (strain PCC 8801 / RF-1) (Cyanothece sp. (strain PCC 8801)) protein is ATP-dependent dethiobiotin synthetase BioD.